The primary structure comprises 306 residues: Non-specific ribonucleoside hydrolase RihC (306 aa).

Residue histidine 235 is part of the active site.

This sequence belongs to the IUNH family. RihC subfamily.

In terms of biological role, hydrolyzes both purine and pyrimidine ribonucleosides with a broad-substrate specificity. This chain is Non-specific ribonucleoside hydrolase RihC, found in Salmonella agona (strain SL483).